The sequence spans 658 residues: Glycogen debranching enzyme (658 aa).

Asp-335 (nucleophile) is an active-site residue. Glu-370 functions as the Proton donor in the catalytic mechanism.

Belongs to the glycosyl hydrolase 13 family.

The enzyme catalyses Hydrolysis of (1-&gt;6)-alpha-D-glucosidic linkages to branches with degrees of polymerization of three or four glucose residues in limit dextrin.. It participates in glycan degradation; glycogen degradation. Removes maltotriose and maltotetraose chains that are attached by 1,6-alpha-linkage to the limit dextrin main chain, generating a debranched limit dextrin. The polypeptide is Glycogen debranching enzyme (Erwinia tasmaniensis (strain DSM 17950 / CFBP 7177 / CIP 109463 / NCPPB 4357 / Et1/99)).